The sequence spans 147 residues: Small ribosomal subunit protein bS18 (147 aa).

This sequence belongs to the bacterial ribosomal protein bS18 family. In terms of assembly, part of the 30S ribosomal subunit. Forms a tight heterodimer with protein bS6.

In terms of biological role, binds as a heterodimer with protein bS6 to the central domain of the 16S rRNA, where it helps stabilize the platform of the 30S subunit. The protein is Small ribosomal subunit protein bS18 of Dehalococcoides mccartyi (strain ATCC BAA-2100 / JCM 16839 / KCTC 5957 / BAV1).